The primary structure comprises 147 residues: UPF0306 protein YE0465 (147 aa).

This sequence belongs to the UPF0306 family.

This chain is UPF0306 protein YE0465, found in Yersinia enterocolitica serotype O:8 / biotype 1B (strain NCTC 13174 / 8081).